The primary structure comprises 282 residues: 4-diphosphocytidyl-2-C-methyl-D-erythritol kinase (282 aa).

Lys11 is an active-site residue. Residue 93 to 103 (LVSAGLAGGSA) coordinates ATP. The active site involves Asp133.

This sequence belongs to the GHMP kinase family. IspE subfamily.

It catalyses the reaction 4-CDP-2-C-methyl-D-erythritol + ATP = 4-CDP-2-C-methyl-D-erythritol 2-phosphate + ADP + H(+). The protein operates within isoprenoid biosynthesis; isopentenyl diphosphate biosynthesis via DXP pathway; isopentenyl diphosphate from 1-deoxy-D-xylulose 5-phosphate: step 3/6. In terms of biological role, catalyzes the phosphorylation of the position 2 hydroxy group of 4-diphosphocytidyl-2C-methyl-D-erythritol. This is 4-diphosphocytidyl-2-C-methyl-D-erythritol kinase from Ehrlichia canis (strain Jake).